The sequence spans 101 residues: UPF0473 protein STER_1939 (101 aa).

Belongs to the UPF0473 family.

The polypeptide is UPF0473 protein STER_1939 (Streptococcus thermophilus (strain ATCC BAA-491 / LMD-9)).